The sequence spans 342 residues: MNIFAIETSCDETSASVVLNGLKVKSVVIYSQIKIHAGFFGVVPELASRSHIENINLVIWRALSDAGINFTDFSQKIDALAFTSGPGLAGALLVGAIAAKSLACVYKKPLIPVNHLDGHLYSSLIENRSVKLPFLSLIISGGHTELVVVEDFGKYKVLGSTRDDAAGEAFDKAAKMLGLSYPGGPIIDKIAESGNPEAVRFTRPYLKGSWDFSFSGIKTALLNYLKTNPVRNEKQLNDICASFRQAVAETLCFKSFEAAKKFNLKRIVLGGGVSANSLIRKIFLETGQKNNTKVFIPSLIYSTDNAAMIGCAAYFKQKKCGLKYDNIQLKPNPSLPLENWRL.

The Fe cation site is built by histidine 115 and histidine 119. Substrate contacts are provided by residues 138 to 142 (IISGG), aspartate 171, glycine 184, aspartate 188, and asparagine 276. Aspartate 304 is a binding site for Fe cation.

Belongs to the KAE1 / TsaD family. It depends on Fe(2+) as a cofactor.

It localises to the cytoplasm. It catalyses the reaction L-threonylcarbamoyladenylate + adenosine(37) in tRNA = N(6)-L-threonylcarbamoyladenosine(37) in tRNA + AMP + H(+). Its function is as follows. Required for the formation of a threonylcarbamoyl group on adenosine at position 37 (t(6)A37) in tRNAs that read codons beginning with adenine. Is involved in the transfer of the threonylcarbamoyl moiety of threonylcarbamoyl-AMP (TC-AMP) to the N6 group of A37, together with TsaE and TsaB. TsaD likely plays a direct catalytic role in this reaction. In Endomicrobium trichonymphae, this protein is tRNA N6-adenosine threonylcarbamoyltransferase.